A 969-amino-acid polypeptide reads, in one-letter code: RNA polymerase-associated protein RapA (969 aa).

One can recognise a Helicase ATP-binding domain in the interval 164 to 334 (EVGRRYAPRV…FARLRLLDPD (171 aa)). 177-184 (DEVGLGKT) contacts ATP. The short motif at 280–283 (DEAH) is the DEAH box element. In terms of domain architecture, Helicase C-terminal spans 492-672 (RVNWLLELLK…GLEPLIEESA (181 aa)).

This sequence belongs to the SNF2/RAD54 helicase family. RapA subfamily. Interacts with the RNAP. Has a higher affinity for the core RNAP than for the holoenzyme. Its ATPase activity is stimulated by binding to RNAP.

Its function is as follows. Transcription regulator that activates transcription by stimulating RNA polymerase (RNAP) recycling in case of stress conditions such as supercoiled DNA or high salt concentrations. Probably acts by releasing the RNAP, when it is trapped or immobilized on tightly supercoiled DNA. Does not activate transcription on linear DNA. Probably not involved in DNA repair. The protein is RNA polymerase-associated protein RapA of Aliivibrio salmonicida (strain LFI1238) (Vibrio salmonicida (strain LFI1238)).